The following is a 537-amino-acid chain: Periplasmic murein peptide-binding protein MppA (537 aa).

The signal sequence occupies residues 1-22 (MKHSVSVTCCALLVSSISLSYA). 9 residues coordinate L-alanyl-gamma-D-glutamyl-meso-2,6-diaminopimelate: Lys42, Val54, Leu56, Gln289, Arg424, Ser435, Val437, Asp439, and Thr506.

This sequence belongs to the bacterial solute-binding protein 5 family. The complex is composed of two ATP-binding proteins (OppD and OppF), two transmembrane proteins (OppB and OppC) and a solute-binding protein (MppA).

It is found in the periplasm. Functionally, part of the ABC transporter complex MppA-OppBCDF involved in the uptake of the cell wall murein tripeptide L-alanyl-gamma-D-glutamyl-meso-diaminopimelate. Is involved in the recycling of cell wall peptides. Binds the cell wall peptide L-Ala-D-Gly-gamma-meso-diaminopimelic acid. Can also transport ordinary alpha-linked tripeptides such as Pro-Phe-Lys, but with much lower efficiency than OppA. Cannot bind typical tripeptides such as Lys-Glu-Lys, Lys-Lys-Lys or Ala-Ala-Ala. The chain is Periplasmic murein peptide-binding protein MppA from Escherichia coli (strain K12).